Consider the following 345-residue polypeptide: AA9 family lytic polysaccharide monooxygenase D (345 aa).

An N-terminal signal peptide occupies residues 1–21 (MPSFTSKTLLAALAGAAAVNA). Positions 22 and 107 each coordinate Cu(2+). C77 and C200 are disulfide-bonded. Residue N160 is glycosylated (N-linked (GlcNAc...) asparagine). O2 is bound by residues H186 and Q195. Residue Y197 coordinates Cu(2+). The interval 315-345 (VQTSTRPISTRPQPTRCPGLGRRHLRKVARA) is disordered. Over residues 318–327 (STRPISTRPQ) the composition is skewed to polar residues. The span at 335–345 (GRRHLRKVARA) shows a compositional bias: basic residues.

This sequence belongs to the polysaccharide monooxygenase AA9 family. Cu(2+) is required as a cofactor.

The protein localises to the secreted. The enzyme catalyses [(1-&gt;4)-beta-D-glucosyl]n+m + reduced acceptor + O2 = 4-dehydro-beta-D-glucosyl-[(1-&gt;4)-beta-D-glucosyl]n-1 + [(1-&gt;4)-beta-D-glucosyl]m + acceptor + H2O.. Lytic polysaccharide monooxygenase (LPMO) that depolymerizes crystalline and amorphous polysaccharides via the oxidation of scissile alpha- or beta-(1-4)-glycosidic bonds, yielding C1 or C4 oxidation products. Catalysis by LPMOs requires the reduction of the active-site copper from Cu(II) to Cu(I) by a reducing agent and H(2)O(2) or O(2) as a cosubstrate. The chain is AA9 family lytic polysaccharide monooxygenase D from Podospora anserina (strain S / ATCC MYA-4624 / DSM 980 / FGSC 10383) (Pleurage anserina).